The primary structure comprises 287 residues: Bifunctional protein FolD (287 aa).

NADP(+) is bound by residues 166–168, Ser-191, and Ile-232; that span reads GAS.

It belongs to the tetrahydrofolate dehydrogenase/cyclohydrolase family. Homodimer.

The enzyme catalyses (6R)-5,10-methylene-5,6,7,8-tetrahydrofolate + NADP(+) = (6R)-5,10-methenyltetrahydrofolate + NADPH. It carries out the reaction (6R)-5,10-methenyltetrahydrofolate + H2O = (6R)-10-formyltetrahydrofolate + H(+). The protein operates within one-carbon metabolism; tetrahydrofolate interconversion. In terms of biological role, catalyzes the oxidation of 5,10-methylenetetrahydrofolate to 5,10-methenyltetrahydrofolate and then the hydrolysis of 5,10-methenyltetrahydrofolate to 10-formyltetrahydrofolate. The sequence is that of Bifunctional protein FolD from Haemophilus ducreyi (strain 35000HP / ATCC 700724).